The following is a 153-amino-acid chain: Catabolic 3-dehydroquinase (153 aa).

Y24 (proton acceptor) is an active-site residue. Positions 75, 81, and 88 each coordinate substrate. Catalysis depends on H101, which acts as the Proton donor. Substrate is bound by residues 102 to 103 (VS) and R112.

It belongs to the type-II 3-dehydroquinase family. In terms of assembly, homododecamer. Adopts a ring-like structure, composed of an arrangement of two hexameric rings stacked on top of one another.

The catalysed reaction is 3-dehydroquinate = 3-dehydroshikimate + H2O. The protein operates within aromatic compound metabolism; 3,4-dihydroxybenzoate biosynthesis; 3,4-dihydroxybenzoate from 3-dehydroquinate: step 1/2. Its function is as follows. Is involved in the catabolism of quinate. Allows the utilization of quinate as carbon source via the beta-ketoadipate pathway. This Emericella nidulans (strain FGSC A4 / ATCC 38163 / CBS 112.46 / NRRL 194 / M139) (Aspergillus nidulans) protein is Catabolic 3-dehydroquinase.